We begin with the raw amino-acid sequence, 123 residues long: Angiogenin-2 (123 aa).

Pyrrolidone carboxylic acid is present on Q1. H12 acts as the Proton acceptor in catalysis. 3 disulfide bridges follow: C25-C80, C38-C91, and C56-C106. The Nucleolar localization signal motif lies at 30 to 34; sequence ERRNM. N33 carries an N-linked (GlcNAc...) asparagine glycan. Zn(2+)-binding residues include D40, H82, and H113. H113 functions as the Proton donor in the catalytic mechanism.

It belongs to the pancreatic ribonuclease family. Serum and milk.

The protein localises to the cytoplasmic vesicle. The protein resides in the secretory vesicle lumen. It localises to the secreted. It is found in the nucleus. Its subcellular location is the nucleolus. Divalent metal ions, such as Cu2+ and Zn2+, may inhibit the ribonucleolytic activity. In terms of biological role, binds tightly to placental ribonuclease inhibitor and has very low ribonuclease activity. Has potent angiogenic activity. Angiogenin induces vascularization of normal and malignant tissues. Abolishes protein synthesis by specifically hydrolyzing cellular tRNAs. This chain is Angiogenin-2, found in Bos taurus (Bovine).